We begin with the raw amino-acid sequence, 1261 residues long: SNF2 domain-containing protein CLASSY 2 (1261 aa).

Residues 458–479 are disordered; that stretch reads FQKRTSRSSRSVAPKTEDSDEP. Positions 704-904 constitute a Helicase ATP-binding domain; the sequence is DPTSGNIGGC…FNTLCLARPK (201 aa). ATP is bound at residue 717–724; it reads HSPGAGKT. Positions 855–858 match the DEAH box motif; that stretch reads DEGH. Residues 1067–1232 form the Helicase C-terminal domain; the sequence is FVLNLIFRVV…DPSLWQAEKI (166 aa).

Belongs to the helicase family. Interacts with NRPD1 and SHH1.

The protein localises to the nucleus. Functionally, probable chromatin remodeling factor. The protein is SNF2 domain-containing protein CLASSY 2 (CLSY2) of Arabidopsis thaliana (Mouse-ear cress).